The primary structure comprises 334 residues: Osteopetrosis-associated transmembrane protein 1 (334 aa).

The signal sequence occupies residues 1–31 (MEPGPTAAQRRCSLPPWLPLGLLLWSGLALG). The Lumenal segment spans residues 32–284 (ALPFGSSPHR…CSVPCSDTVP (253 aa)). N-linked (GlcNAc...) asparagine glycans are attached at residues Asn-93, Asn-128, Asn-135, Asn-163, Asn-177, Asn-184, Asn-194, Asn-216, Asn-263, and Asn-274. A helical transmembrane segment spans residues 285–305 (VIAVSVFILFLPVVFYLSSFL). The Cytoplasmic segment spans residues 306-334 (HSEQKKRKLILPKRLKSSTSFANIQENSN). Residues Ser-322, Ser-325, and Ser-333 each carry the phosphoserine modification.

Belongs to the OSTM1 family. As to quaternary structure, chloride channel 7 are heteromers of alpha (CLCN7) and beta (OSTM1) subunits. In terms of processing, undergoes proteolytic cleavage in the luminal domain, the cleaved fragments might be linked by disulfide bonds with the remnant of the protein. Post-translationally, highly N-glycosylated.

It localises to the lysosome membrane. Required for osteoclast and melanocyte maturation and function. The sequence is that of Osteopetrosis-associated transmembrane protein 1 (OSTM1) from Homo sapiens (Human).